A 348-amino-acid chain; its full sequence is Putative olfactory receptor 3A4 (348 aa).

Residues 1 to 28 (MDLGNSGNDSVVTKFVLLGLTETAALQP) are Extracellular-facing. N-linked (GlcNAc...) asparagine glycosylation occurs at N8. A helical transmembrane segment spans residues 29-52 (ILFVIFLLAYVTTIGGTLSILAAI). The Cytoplasmic portion of the chain corresponds to 53 to 60 (LMETKLHS). A helical membrane pass occupies residues 61–82 (PMYFFLGNLSLPDVGCVSVTVP). Topologically, residues 83 to 103 (AMLSHFISNDRSIPYKACLSE) are extracellular. A disulfide bridge connects residues C100 and C192. Residues 104 to 123 (LFFFHLLAGADCFLLTIMAY) form a helical membrane-spanning segment. Residues 124–143 (DRYLAICQSLTYSSRMSWGI) lie on the Cytoplasmic side of the membrane. The helical transmembrane segment at 144 to 161 (QQALVGMSCVFSFTNALT) threads the bilayer. Topologically, residues 162–199 (QTVALSPLNFCGPNVINHFYCDLPQPFQLSCSSVHLNG) are extracellular. Residues 200 to 222 (QLLFVAAAFMGVAPLVLITVSYA) traverse the membrane as a helical segment. Residues 223-239 (HVAAAVLRIRSAEGRKK) lie on the Cytoplasmic side of the membrane. The helical transmembrane segment at 240 to 262 (AFSTCSSHLTVVGIFYGTGVFSY) threads the bilayer. At 263 to 275 (TRLGSVESSDKDK) the chain is on the extracellular side. Residues 276 to 295 (GIGILNTVISPMLNPLIYWT) traverse the membrane as a helical segment. Residues 296-348 (SLLDVGCISHCSSDAGVSPGPPVQSSLCCLQFTALLSPPPGWGGLSPLNSHGL) are Cytoplasmic-facing.

It belongs to the G-protein coupled receptor 1 family.

The protein resides in the cell membrane. Odorant receptor. The chain is Putative olfactory receptor 3A4 (OR3A4P) from Homo sapiens (Human).